Reading from the N-terminus, the 189-residue chain is Insecticyanin-A (189 aa).

Intrachain disulfides connect C9–C119 and C43–C175.

The protein belongs to the calycin superfamily. Lipocalin family. As to quaternary structure, homotetramer. Synthesized only in the caterpillars, apparently by the epidermis and secreted into the hemolymph. The protein is passed over from the larval hemolymph to that of pupae and adults and is sequestered in the eggs.

The protein resides in the secreted. Functionally, this protein binds a chromophore: biliverdin IX, isomer gamma. Mixed with lipoprotein-bound carotenes, this blue protein provides hornworms with their green cryptic coloration which serves a camouflage. This Manduca sexta (Tobacco hawkmoth) protein is Insecticyanin-A (INSA).